Consider the following 261-residue polypeptide: Trifolitoxin immunity protein (261 aa).

Required for TFX resistance. This Rhizobium leguminosarum bv. trifolii protein is Trifolitoxin immunity protein (tfxG).